The following is a 509-amino-acid chain: Cytochrome P450 6A1 (509 aa).

Residue Cys449 participates in heme binding.

The protein belongs to the cytochrome P450 family. It depends on heme as a cofactor.

It is found in the endoplasmic reticulum membrane. It localises to the microsome membrane. It catalyses the reaction an organic molecule + reduced [NADPH--hemoprotein reductase] + O2 = an alcohol + oxidized [NADPH--hemoprotein reductase] + H2O + H(+). Involved in the metabolism of insect hormones and in the breakdown of synthetic insecticides. In Musca domestica (House fly), this protein is Cytochrome P450 6A1 (CYP6A1).